Here is an 82-residue protein sequence, read N- to C-terminus: U16-lycotoxin-Ls1a (82 aa).

Residues 1 to 22 form the signal peptide; that stretch reads MSPKVQALLLLVGLITFLAVHA. A propeptide spanning residues 23-34 is cleaved from the precursor; that stretch reads EEELSETVESER. 4 disulfide bridges follow: Cys-36–Cys-51, Cys-43–Cys-56, Cys-50–Cys-67, and Cys-58–Cys-65.

Belongs to the neurotoxin 02 (plectoxin) family. 04 (U16-lycotoxin) subfamily. Expressed by the venom gland.

Its subcellular location is the secreted. The sequence is that of U16-lycotoxin-Ls1a from Lycosa singoriensis (Wolf spider).